An 80-amino-acid polypeptide reads, in one-letter code: SLHRPPGCRHCVGQLRLCDLDTADAVEEMGAEHVPCPVDDIVVDEDNKVVTTPAYMLAQNIAEAASGIEKLVARVLVLTA.

It belongs to the peptidase C56 family. Homodimer.

The catalysed reaction is glyoxal + H2O = glycolate + H(+). Its function is as follows. Displays glyoxalase activity, catalyzing the conversion of glyoxal to glycolate. However, this apparent glyoxalase activity may reflect a deglycase activity, which could be the primary function of this protein like other DJ-1 superfamily members such as PARK7, YajL, YhbO and HchA. Is not able to use methylglyoxal as substrate. The sequence is that of Putative glyoxalase ElbB (elbB) from Klebsiella oxytoca.